A 431-amino-acid polypeptide reads, in one-letter code: Protein prenyltransferase alpha subunit repeat-containing protein 1-B (431 aa).

PFTA repeat units follow at residues 85–118 (ELID…TLNP), 120–153 (KDLQ…VQEL), 178–211 (EEMH…GNLN), 217–250 (DELS…LCKT), and 293–326 (EEMK…HQLL). Residues 363-383 (PMDVDGMSDPNKQGYTQETKR) form a disordered region. The stretch at 394 to 431 (SLDSELRFINCVLTNCCSPEQSRFAASYRKWLLSLQGY) is one PFTA 6 repeat.

This sequence belongs to the protein prenyltransferase subunit alpha family.

This is Protein prenyltransferase alpha subunit repeat-containing protein 1-B (ptar1-b) from Xenopus laevis (African clawed frog).